The chain runs to 258 residues: MGRVIRAQRKGAGSVFKSHTHHRKGPAKFRSLDFGERNGYLKGVVTEIIHDPGRGAPLARVAFRHPFRFKKQKELFVAAEGMYTGQFLYCGKKATLVVGNVLPLRSIPEGAVICNVEHHVGDRGVFARASGDYAIVIAHNPDNDTSRIKLPSGSKKIVPSGCRAMIGQVAGGGRTEKPMLKAGNAYHKYRVKRNCWPKVRGVAMNPVEHPHGGGNHQHIGHASTVRRDAPPGKKVGLIAARRTGRLRGQAAALASKAD.

A disordered region spans residues 211–231 (HGGGNHQHIGHASTVRRDAPP).

It belongs to the universal ribosomal protein uL2 family.

In Arabidopsis thaliana (Mouse-ear cress), this protein is Large ribosomal subunit protein uL2x (RPL8C).